The chain runs to 418 residues: Thyroid hormone receptor alpha (418 aa).

Residues 1 to 41 are disordered; it reads MDQNLSGLDCLSEPDEKRWPDGKRKRKNSQCMGKSGMSGDS. The tract at residues 1–60 is modulating; the sequence is MDQNLSGLDCLSEPDEKRWPDGKRKRKNSQCMGKSGMSGDSSVSLLSAGYIPSYLTKDEP. Positions 61, 64, 78, 81, 99, 105, 115, and 118 each coordinate Zn(2+). NR C4-type zinc fingers lie at residues 61-81 and 99-123; these read CVVCSDKATGYHYRCITCEGC and CKYDGCCIIDKITRNQCQLCRFKKC. A DNA-binding region (nuclear receptor) is located at residues 61-135; it reads CVVCSDKATG…VGMAMDLVLD (75 aa). Residues 171 to 415 enclose the NR LBD domain; that stretch reads EEWELIRIVT…PPLFLEVFED (245 aa). 3,3',5-triiodo-L-thyronine-binding residues include Arg-236 and Ser-285.

It belongs to the nuclear hormone receptor family. NR1 subfamily. In terms of tissue distribution, highest level of expression in erythrocytes. Also expressed in liver, tail, eye, muscle and skin.

The protein resides in the nucleus. Its function is as follows. Nuclear hormone receptor that can act as a repressor or activator of transcription. High affinity receptor for thyroid hormones, including triiodothyronine and thyroxine. The chain is Thyroid hormone receptor alpha (thra) from Aquarana catesbeiana (American bullfrog).